The following is a 209-amino-acid chain: N-(5'-phosphoribosyl)anthranilate isomerase (209 aa).

Belongs to the TrpF family.

The enzyme catalyses N-(5-phospho-beta-D-ribosyl)anthranilate = 1-(2-carboxyphenylamino)-1-deoxy-D-ribulose 5-phosphate. It functions in the pathway amino-acid biosynthesis; L-tryptophan biosynthesis; L-tryptophan from chorismate: step 3/5. The chain is N-(5'-phosphoribosyl)anthranilate isomerase from Erythrobacter litoralis (strain HTCC2594).